Reading from the N-terminus, the 502-residue chain is Pyruvate kinase (502 aa).

Arg-54 is a substrate binding site. Asn-56, Ser-58, Asp-88, and Thr-89 together coordinate K(+). 56–59 (NFSH) serves as a coordination point for ATP. Positions 95 and 184 each coordinate ATP. Glu-252 is a binding site for Mg(2+). Residues Gly-275, Asp-276, and Thr-308 each contribute to the substrate site. Asp-276 provides a ligand contact to Mg(2+).

Belongs to the pyruvate kinase family. Homotetramer. Mg(2+) serves as cofactor. Requires K(+) as cofactor.

The catalysed reaction is pyruvate + ATP = phosphoenolpyruvate + ADP + H(+). The protein operates within carbohydrate degradation; glycolysis; pyruvate from D-glyceraldehyde 3-phosphate: step 5/5. Regulated by phosphoenolpyruvate substrate and is allosterically activated by ribose-5-phosphate, AMP and other nucleoside monophosphates but not by fructose-1,6-bisphosphate. The chain is Pyruvate kinase (pyk) from Lactococcus lactis subsp. lactis (strain IL1403) (Streptococcus lactis).